An 819-amino-acid chain; its full sequence is Nuclear pore complex protein Nup93 (819 aa).

Thr-49 is modified (phosphothreonine). Phosphoserine occurs at positions 52, 66, 72, 75, 80, 430, and 767.

Belongs to the nucleoporin interacting component (NIC) family. Part of the nuclear pore complex (NPC). Component of the p62 complex, a complex composed of NUP62 and NUP54. Forms a complex with NUP35, NUP155, NUP205 and lamin B; the interaction with NUP35 is direct. Does not interact with TPR. Interacts with SMAD4 and IPO7; translocates SMAD4 to the nucleus through the NPC upon BMP7 stimulation resulting in activation of SMAD4 signaling.

The protein localises to the nucleus membrane. The protein resides in the nucleus. It is found in the nuclear pore complex. It localises to the nucleus envelope. In terms of biological role, plays a role in the nuclear pore complex (NPC) assembly and/or maintenance. May anchor nucleoporins, but not NUP153 and TPR, to the NPC. During renal development, regulates podocyte migration and proliferation through SMAD4 signaling. In Rattus norvegicus (Rat), this protein is Nuclear pore complex protein Nup93 (Nup93).